Here is a 483-residue protein sequence, read N- to C-terminus: Glutamyl-tRNA(Gln) amidotransferase subunit A (483 aa).

Residues lysine 76 and serine 151 each act as charge relay system in the active site. The active-site Acyl-ester intermediate is serine 175.

This sequence belongs to the amidase family. GatA subfamily. As to quaternary structure, heterotrimer of A, B and C subunits.

The enzyme catalyses L-glutamyl-tRNA(Gln) + L-glutamine + ATP + H2O = L-glutaminyl-tRNA(Gln) + L-glutamate + ADP + phosphate + H(+). Allows the formation of correctly charged Gln-tRNA(Gln) through the transamidation of misacylated Glu-tRNA(Gln) in organisms which lack glutaminyl-tRNA synthetase. The reaction takes place in the presence of glutamine and ATP through an activated gamma-phospho-Glu-tRNA(Gln). In Ectopseudomonas mendocina (strain ymp) (Pseudomonas mendocina), this protein is Glutamyl-tRNA(Gln) amidotransferase subunit A.